The sequence spans 297 residues: MTIKVIVVGAGGNLGHHIVSALDDDHRFTVTILARASSKSKFPSHITVHRVDDYYPELEVVEAFKGQDVVISTVTTGAIQRQKTLIDAALKAGVGRFIPSEFGHDTRNGNASKMLPQMYQQKREVVEYLRAKQNDGLEWTAFVTGPFLEVAIENFLGFNLSQQHATILNEGSDRWSATTRATVGLAVKNSLLIPEKTSNRYLFIDTVTASQNDVLLALRKMTGTEWGVDYVDAEEQKRVAIEHLSKGRLIGIPMLMRYITCVRGYGGDYLDYETSANEILSLPVRNVDEVIASILKG.

Belongs to the NmrA-type oxidoreductase family. Isoflavone reductase subfamily.

Its pathway is secondary metabolite biosynthesis. Its function is as follows. Oxidoreductase; part of the gene cluster that mediates the biosynthesis of the asperipin-2a, a bicyclic peptide that possesses two macrocyclic ether rings consisting of 14- and 17-membered paracyclophans. The pathway starts with the processing of the precursor aprA by kexin proteases to produce 11 identical copies of the hexapeptide Phe-Tyr-Tyr-Thr-Gly-Tyr. Macrocyclization of asperipin-2a may accompany an alpha-hydroxylation-dehydration sequence to give an imine, which is readily hydrolyzed to yield putative ketone intermediate. The reductase aprR may be required for the final reduction to yield asperipin-2a. This is Oxidoreductase aprR from Aspergillus flavus (strain ATCC 200026 / FGSC A1120 / IAM 13836 / NRRL 3357 / JCM 12722 / SRRC 167).